A 1003-amino-acid polypeptide reads, in one-letter code: cGMP-dependent protein kinase (1003 aa).

The interval 1-141 (MGACSSKAQH…KAIKQQEDTQ (141 aa)) is disordered. A lipid anchor (N-myristoyl glycine) is attached at glycine 2. Cysteine 4 is lipidated: S-palmitoyl cysteine. Over residues 69–85 (EQQQQQQQQQQQQQEQQ) the composition is skewed to low complexity. Composition is skewed to basic and acidic residues over residues 86–109 (QHPE…ERKP) and 127–141 (ERKV…EDTQ). CNMP-binding domain regions lie at residues 173-289 (VCSS…FLAS), 292-391 (FFEM…RVLG), 411-548 (VFAS…ATLG), and 570-669 (IFRY…LQIV). 3',5'-cyclic GMP-binding residues include glycine 237, glutamate 238, arginine 247, and threonine 248. 6 residues coordinate 3',5'-cyclic GMP: arginine 625, glycine 634, glutamate 635, alanine 637, arginine 644, and serine 645. The Protein kinase domain maps to 693–950 (LNVVRVVGRG…YKDIKEHAFF (258 aa)). ATP is bound by residues 699–707 (VGRGTFGTV) and lysine 722. Aspartate 816 acts as the Proton acceptor in catalysis. An AGC-kinase C-terminal domain is found at 951 to 1003 (SDFDWDRLAGRDLSPPLLPKGEIYAEDAEEGGLDIEEDEGIELEDEYEWDKDF).

It belongs to the protein kinase superfamily. AGC Ser/Thr protein kinase family. cGMP subfamily. In terms of assembly, monomer. It depends on Mg(2+) as a cofactor.

It is found in the cell membrane. The protein localises to the cytoplasm. The catalysed reaction is L-seryl-[protein] + ATP = O-phospho-L-seryl-[protein] + ADP + H(+). The enzyme catalyses L-threonyl-[protein] + ATP = O-phospho-L-threonyl-[protein] + ADP + H(+). Activated by cGMP. The cGMP-binding domains acts cooperatively to activate PKG. Inhibited by the antiparasitic small molecule 4-[2-(4-fluorophenyl)-5-(1-methylpiperidine-4-yl)-1Hpyrrol- 3-yl]pyridine (compound 1). Functionally, serine/threonine protein kinase which acts as a downstream effector of the second messenger cGMP. The sequence is that of cGMP-dependent protein kinase from Eimeria tenella (Coccidian parasite).